The sequence spans 310 residues: Ribosomal RNA small subunit methyltransferase H (310 aa).

S-adenosyl-L-methionine contacts are provided by residues 32 to 34 (GGH), Asp52, Phe79, Asp100, and Gln107.

Belongs to the methyltransferase superfamily. RsmH family.

The protein localises to the cytoplasm. It carries out the reaction cytidine(1402) in 16S rRNA + S-adenosyl-L-methionine = N(4)-methylcytidine(1402) in 16S rRNA + S-adenosyl-L-homocysteine + H(+). In terms of biological role, specifically methylates the N4 position of cytidine in position 1402 (C1402) of 16S rRNA. This is Ribosomal RNA small subunit methyltransferase H from Geobacillus kaustophilus (strain HTA426).